A 487-amino-acid chain; its full sequence is Serine/threonine-protein kinase 4 (487 aa).

Methionine 1 is subject to N-acetylmethionine. The residue at position 3 (threonine 3) is a Phosphothreonine. In terms of domain architecture, Protein kinase spans 30–281; it reads FDVLEKLGEG…ATQLLQHPFV (252 aa). ATP-binding positions include 36–44 and lysine 59; that span reads LGEGSYGSV. Residue aspartate 149 is the Proton acceptor of the active site. Residue threonine 183 is modified to Phosphothreonine; by autocatalysis. Serine 265 bears the Phosphoserine mark. Residues 290 to 310 are a coiled coil; it reads LRDLINEAMDVKLKRQESQQR. Residues 303–312 are compositionally biased toward basic and acidic residues; sequence KRQESQQREV. Residues 303–332 form a disordered region; sequence KRQESQQREVDQDDEENSEEDEMDSGTMVR. Acidic residues predominate over residues 313-326; that stretch reads DQDDEENSEEDEMD. Serine 320 carries the phosphoserine modification. Threonine 340 and threonine 367 each carry phosphothreonine. Threonine 387 is modified (phosphothreonine; by PKB/AKT1). A phosphoserine mark is found at serine 410 and serine 414. Tyrosine 433 bears the Phosphotyrosine mark. An SARAH domain is found at 433–480; it reads YEFLKSWTVEDLQKRLLALDPMMEQEIEEIRQKYQSKRQPILDAIEAK.

The protein belongs to the protein kinase superfamily. STE Ser/Thr protein kinase family. STE20 subfamily. As to quaternary structure, homodimer; mediated via the coiled-coil region. Interacts with NORE1, which inhibits autoactivation. Interacts with and stabilizes SAV1. Interacts with RASSF1. Interacts with FOXO3. Interacts with RASSF2 (via SARAH domain). Interacts with AR, PKB/AKT1, TNNI3 and SIRT1. Interacts with DLG5 (via PDZ domain 3). Interacts with MARK3 in the presence of DLG5. Interacts with SCRIB in the presence of DLG5. It depends on Mg(2+) as a cofactor. Autophosphorylated on serine and threonine residues. Phosphorylation at Thr-387 by PKB/AKT1, leads to inhibition of its: kinase activity, nuclear translocation and autophosphorylation at Thr-183. It also diminishes its cleavage by caspases and its ability to phosphorylate FOXO3. Post-translationally, proteolytically cleaved by caspase-3 during apoptosis at Asp-326 and Asp-349 resulting in a 37 kDa or a 39 kDa subunit respectively. The 39 kDa subunit is further cleaved into the 37 kDa form. Proteolytic cleavage results in kinase activation and nuclear translocation of the truncated form (MST1/N). It is less likely that cleavage at Asp-349 is a prerequisite for activation as this site is not conserved in the murine ortholog. Expressed in prostate cancer and levels increase from the normal to the malignant state (at protein level). Ubiquitously expressed.

Its subcellular location is the cytoplasm. The protein resides in the nucleus. The enzyme catalyses L-seryl-[protein] + ATP = O-phospho-L-seryl-[protein] + ADP + H(+). It catalyses the reaction L-threonyl-[protein] + ATP = O-phospho-L-threonyl-[protein] + ADP + H(+). Inhibited by the C-terminal non-catalytic region. Activated by caspase-cleavage. Full activation also requires homodimerization and autophosphorylation of Thr-183. Activated by RASSF1 which acts by preventing its dephosphorylation. Stress-activated, pro-apoptotic kinase which, following caspase-cleavage, enters the nucleus and induces chromatin condensation followed by internucleosomal DNA fragmentation. Key component of the Hippo signaling pathway which plays a pivotal role in organ size control and tumor suppression by restricting proliferation and promoting apoptosis. The core of this pathway is composed of a kinase cascade wherein STK3/MST2 and STK4/MST1, in complex with its regulatory protein SAV1, phosphorylates and activates LATS1/2 in complex with its regulatory protein MOB1, which in turn phosphorylates and inactivates YAP1 oncoprotein and WWTR1/TAZ. Phosphorylation of YAP1 by LATS2 inhibits its translocation into the nucleus to regulate cellular genes important for cell proliferation, cell death, and cell migration. STK3/MST2 and STK4/MST1 are required to repress proliferation of mature hepatocytes, to prevent activation of facultative adult liver stem cells (oval cells), and to inhibit tumor formation. Phosphorylates 'Ser-14' of histone H2B (H2BS14ph) during apoptosis. Phosphorylates FOXO3 upon oxidative stress, which results in its nuclear translocation and cell death initiation. Phosphorylates MOBKL1A, MOBKL1B and RASSF2. Phosphorylates TNNI3 (cardiac Tn-I) and alters its binding affinity to TNNC1 (cardiac Tn-C) and TNNT2 (cardiac Tn-T). Phosphorylates FOXO1 on 'Ser-212' and regulates its activation and stimulates transcription of PMAIP1 in a FOXO1-dependent manner. Phosphorylates SIRT1 and inhibits SIRT1-mediated p53/TP53 deacetylation, thereby promoting p53/TP53 dependent transcription and apoptosis upon DNA damage. Acts as an inhibitor of PKB/AKT1. Phosphorylates AR on 'Ser-650' and suppresses its activity by intersecting with PKB/AKT1 signaling and antagonizing formation of AR-chromatin complexes. The polypeptide is Serine/threonine-protein kinase 4 (Homo sapiens (Human)).